The following is a 249-amino-acid chain: Derlin-2.1 (249 aa).

The Cytoplasmic segment spans residues 1-21; that stretch reads MAQAVEEWYRQMPIITRSYLT. Residues 22-42 form a helical membrane-spanning segment; the sequence is AAVVTTVGCTLEIISPYHLYL. At 43–96 the chain is on the lumenal side; the sequence is NPKLVVQHYEIWRLVTNFLYFRKMDLDFLFHMFFLARYCKLLEENSFRGRTADF. The helical transmembrane segment at 97 to 117 threads the bilayer; it reads FYMLLFGATVLTSIVLIGGMI. At 118–122 the chain is on the cytoplasmic side; it reads PYISE. The chain crosses the membrane as a helical span at residues 123–143; the sequence is TFARILFLSNSLTFMMVYVWS. At 144 to 152 the chain is on the lumenal side; it reads KHNPFIHMS. Residues 153-173 traverse the membrane as a helical segment; sequence FLGLFTFTAAYLPWVLLGFSI. The Cytoplasmic portion of the chain corresponds to 174 to 249; sequence LVGSSTWVDL…GAMGLDPQAQ (76 aa).

It belongs to the derlin family. As to expression, expressed in roots, stalks, leaves, embryo and endosperm.

It localises to the endoplasmic reticulum membrane. May be involved in the degradation process of specific misfolded endoplasmic reticulum (ER) luminal proteins. The chain is Derlin-2.1 (DER2.1) from Zea mays (Maize).